Consider the following 514-residue polypeptide: ATP synthase subunit alpha (514 aa).

An ATP-binding site is contributed by G170–T177.

This sequence belongs to the ATPase alpha/beta chains family. In terms of assembly, F-type ATPases have 2 components, CF(1) - the catalytic core - and CF(0) - the membrane proton channel. CF(1) has five subunits: alpha(3), beta(3), gamma(1), delta(1), epsilon(1). CF(0) has three main subunits: a(1), b(2) and c(9-12). The alpha and beta chains form an alternating ring which encloses part of the gamma chain. CF(1) is attached to CF(0) by a central stalk formed by the gamma and epsilon chains, while a peripheral stalk is formed by the delta and b chains.

Its subcellular location is the cell inner membrane. The enzyme catalyses ATP + H2O + 4 H(+)(in) = ADP + phosphate + 5 H(+)(out). Its function is as follows. Produces ATP from ADP in the presence of a proton gradient across the membrane. The alpha chain is a regulatory subunit. This is ATP synthase subunit alpha from Pseudomonas syringae pv. tomato (strain ATCC BAA-871 / DC3000).